A 22-amino-acid polypeptide reads, in one-letter code: Dioicin-1 (22 aa).

It is found in the secreted. The protein localises to the extracellular space. The protein resides in the golgi apparatus. Its subcellular location is the vacuole. It catalyses the reaction Endohydrolysis of the N-glycosidic bond at one specific adenosine on the 28S rRNA.. Its function is as follows. Nicks pBR322 dsDNA. Has adenine polynucleotide glycosidase activity on herring sperm ssDNA. This is Dioicin-1 from Phytolacca dioica (Bella sombra tree).